Here is an 871-residue protein sequence, read N- to C-terminus: Patatin-like phospholipase domain-containing protein CNBE2340 (871 aa).

Residues 20-53 (NEDSPLSPRSFSLPPESPQLSTASPIHQRVSRKR) form a disordered region. Low complexity predominate over residues 23–33 (SPLSPRSFSLP). A helical transmembrane segment spans residues 68–88 (WPLLFFIFFIIYLEFSAYVIT). The region spanning 243–435 (LCLSGGASFG…REDIPLGSLH (193 aa)) is the PNPLA domain. The short motif at 274–278 (GTSAG) is the GXSXG element. The active-site Nucleophile is the Ser-276. Catalysis depends on Asp-422, which acts as the Proton acceptor. Disordered regions lie at residues 586-707 (ALSH…NFGD), 720-748 (LSSP…QRFR), and 760-871 (VSES…QDGA). Composition is skewed to polar residues over residues 594–606 (NDPA…TNPE) and 687–706 (PTHS…SNFG). Over residues 721-748 (SSPFRSIRSNTSSSSNNVQSPSSSQRFR) the composition is skewed to low complexity. Over residues 798–820 (VESHSDRSEDEMLHSGANVKEEY) the composition is skewed to basic and acidic residues.

This sequence belongs to the PLPL family.

It localises to the membrane. Probable lipid hydrolase. The chain is Patatin-like phospholipase domain-containing protein CNBE2340 from Cryptococcus neoformans var. neoformans serotype D (strain B-3501A) (Filobasidiella neoformans).